The following is a 786-amino-acid chain: LPS-assembly protein LptD (786 aa).

An N-terminal signal peptide occupies residues 1-24 (MKKRIPTLLATMIASALYSHQGLA). Cystine bridges form between C31-C726 and C173-C727.

Belongs to the LptD family. In terms of assembly, component of the lipopolysaccharide transport and assembly complex. Interacts with LptE and LptA. Post-translationally, contains two intramolecular disulfide bonds.

Its subcellular location is the cell outer membrane. Together with LptE, is involved in the assembly of lipopolysaccharide (LPS) at the surface of the outer membrane. The polypeptide is LPS-assembly protein LptD (Salmonella typhimurium (strain LT2 / SGSC1412 / ATCC 700720)).